The sequence spans 129 residues: Large ribosomal subunit protein bL12c (129 aa).

Over residues 101 to 123 (KPIKEGMSKADAEAGKKQLEEAG) the composition is skewed to basic and acidic residues. The segment at 101-129 (KPIKEGMSKADAEAGKKQLEEAGAKATLK) is disordered.

The protein belongs to the bacterial ribosomal protein bL12 family. As to quaternary structure, homodimer. Part of the ribosomal stalk of the 50S ribosomal subunit. Forms a multimeric L10(L12)X complex, where L10 forms an elongated spine to which 2 to 4 L12 dimers bind in a sequential fashion. Binds GTP-bound translation factors.

Its subcellular location is the plastid. The protein localises to the chloroplast. Its function is as follows. Forms part of the ribosomal stalk which helps the ribosome interact with GTP-bound translation factors. Is thus essential for accurate translation. This is Large ribosomal subunit protein bL12c from Guillardia theta (Cryptophyte).